The following is a 440-amino-acid chain: 2-methylisoborneol synthase (440 aa).

Residues 1 to 116 are disordered; the sequence is MPDSGPLGPH…SPAPAEPAAG (116 aa). Positions 17 to 27 are enriched in low complexity; that stretch reads TPATTVPDAPA. Residues 48–58 show a composition bias toward pro residues; the sequence is PPVPIPSPSPP. Residues 59–75 show a composition bias toward low complexity; sequence SGSASAAADTPDATTVG. Pro residues predominate over residues 102–111; that stretch reads PSLPGSPAPA. Asp197, Asp198, Glu202, Asn345, Ser349, and Glu353 together coordinate Mg(2+).

Belongs to the terpene synthase family. 2-methylisoborneol synthase subfamily. It depends on Mg(2+) as a cofactor.

The catalysed reaction is (E)-2-methylgeranyl diphosphate + H2O = 2-methylisoborneol + diphosphate. Its function is as follows. Catalyzes the cyclization of 2-methylgeranyl diphosphate (2-MeGPP) to 2-methylisoborneol (2-MIB), which likely involves the intermediacy of 2-methyllinalyl diphosphate. This chain is 2-methylisoborneol synthase, found in Streptomyces ambofaciens (strain ATCC 23877 / 3486 / DSM 40053 / JCM 4204 / NBRC 12836 / NRRL B-2516).